We begin with the raw amino-acid sequence, 326 residues long: Beta-ketoacyl-[acyl-carrier-protein] synthase III (326 aa).

Residues Cys-112 and His-251 contribute to the active site. An ACP-binding region spans residues Gln-252–Arg-256. Asn-281 is an active-site residue.

The protein belongs to the thiolase-like superfamily. FabH family. In terms of assembly, homodimer.

The protein resides in the cytoplasm. It carries out the reaction malonyl-[ACP] + acetyl-CoA + H(+) = 3-oxobutanoyl-[ACP] + CO2 + CoA. It participates in lipid metabolism; fatty acid biosynthesis. Functionally, catalyzes the condensation reaction of fatty acid synthesis by the addition to an acyl acceptor of two carbons from malonyl-ACP. Catalyzes the first condensation reaction which initiates fatty acid synthesis and may therefore play a role in governing the total rate of fatty acid production. Possesses both acetoacetyl-ACP synthase and acetyl transacylase activities. Its substrate specificity determines the biosynthesis of branched-chain and/or straight-chain of fatty acids. This is Beta-ketoacyl-[acyl-carrier-protein] synthase III from Clostridium botulinum (strain ATCC 19397 / Type A).